The chain runs to 211 residues: Thiamine-phosphate synthase (211 aa).

4-amino-2-methyl-5-(diphosphooxymethyl)pyrimidine contacts are provided by residues 37-41 (QLRIK) and Asn-69. Residues Asp-70 and Asp-89 each coordinate Mg(2+). Position 108 (Ser-108) interacts with 4-amino-2-methyl-5-(diphosphooxymethyl)pyrimidine. A 2-[(2R,5Z)-2-carboxy-4-methylthiazol-5(2H)-ylidene]ethyl phosphate-binding site is contributed by 134–136 (TQT). Lys-137 provides a ligand contact to 4-amino-2-methyl-5-(diphosphooxymethyl)pyrimidine. Residues Gly-166 and 186 to 187 (VS) each bind 2-[(2R,5Z)-2-carboxy-4-methylthiazol-5(2H)-ylidene]ethyl phosphate.

The protein belongs to the thiamine-phosphate synthase family. The cofactor is Mg(2+).

The enzyme catalyses 2-[(2R,5Z)-2-carboxy-4-methylthiazol-5(2H)-ylidene]ethyl phosphate + 4-amino-2-methyl-5-(diphosphooxymethyl)pyrimidine + 2 H(+) = thiamine phosphate + CO2 + diphosphate. The catalysed reaction is 2-(2-carboxy-4-methylthiazol-5-yl)ethyl phosphate + 4-amino-2-methyl-5-(diphosphooxymethyl)pyrimidine + 2 H(+) = thiamine phosphate + CO2 + diphosphate. It catalyses the reaction 4-methyl-5-(2-phosphooxyethyl)-thiazole + 4-amino-2-methyl-5-(diphosphooxymethyl)pyrimidine + H(+) = thiamine phosphate + diphosphate. It functions in the pathway cofactor biosynthesis; thiamine diphosphate biosynthesis; thiamine phosphate from 4-amino-2-methyl-5-diphosphomethylpyrimidine and 4-methyl-5-(2-phosphoethyl)-thiazole: step 1/1. Functionally, condenses 4-methyl-5-(beta-hydroxyethyl)thiazole monophosphate (THZ-P) and 2-methyl-4-amino-5-hydroxymethyl pyrimidine pyrophosphate (HMP-PP) to form thiamine monophosphate (TMP). This chain is Thiamine-phosphate synthase, found in Escherichia coli O9:H4 (strain HS).